We begin with the raw amino-acid sequence, 443 residues long: Minovincinine 19-hydroxy-O-acetyltransferase (443 aa).

The active-site Proton acceptor is the H157. Residues 215–222 (RKRFLFSP) carry the Nuclear localization signal motif. Positions 316-343 (TKLVIGELRKAKDKLKNLSQEKLNYVAR) form a coiled coil. Catalysis depends on D384, which acts as the Proton acceptor.

This sequence belongs to the plant acyltransferase family. Monomer. As to expression, expressed in cortical cells of the root tip, especially in hairy roots, as well as in etiolated seedlings. Mostly expressed in roots, and, at lower levels, in leaves.

It is found in the cytoplasm. The protein resides in the nucleus. The enzyme catalyses (+)-minovincinine + acetyl-CoA = (+)-echitovenine + CoA. The protein operates within alkaloid biosynthesis. Its function is as follows. Component of the monoterpenoid indole alkaloids (MIAs, e.g. echitovenine, tabersonine, lochnericine, 19-hydroxytabersonine and horhammericine) biosynthetic pathway; MIAs are used in cancer treatment and other medical applications. Acyltransferase catalyzing the conversion of (+)-minovincinine to (+)-echitovenine. In Catharanthus roseus (Madagascar periwinkle), this protein is Minovincinine 19-hydroxy-O-acetyltransferase.